The primary structure comprises 65 residues: Beta-defensin 41 (65 aa).

An N-terminal signal peptide occupies residues 1–19; the sequence is MKFHLFFFILLFGATILTA. 3 disulfides stabilise this stretch: Cys-35-Cys-63, Cys-42-Cys-56, and Cys-46-Cys-64.

The protein belongs to the beta-defensin family. Isoform 2 is epididymis-specific and expressed mainly in the proximal caput.

The protein resides in the secreted. Functionally, has bactericidal activity. Isoform 2 may play a role in the antimicrobial protection of sperm and urogenital tract epithelia. In Mus musculus (Mouse), this protein is Beta-defensin 41.